The primary structure comprises 206 residues: HTH-type transcriptional regulator Hpr (206 aa).

Residues Ala13 to Gly157 enclose the HTH marR-type domain. Residues Ile63 to Glu86 constitute a DNA-binding region (H-T-H motif). A disordered region spans residues Ser186–Val206.

Homodimer.

Its function is as follows. Negative regulator of protease production and sporulation. This is HTH-type transcriptional regulator Hpr from Bacillus pumilus (strain SAFR-032).